Consider the following 65-residue polypeptide: Alpha-toxin Bot11 (65 aa).

Residues 2–64 form the LCN-type CS-alpha/beta domain; sequence KDGYIVDDRN…VRTVQAGRCR (63 aa). 4 disulfides stabilise this stretch: Cys12–Cys63, Cys16–Cys36, Cys22–Cys46, and Cys26–Cys48.

The protein belongs to the long (4 C-C) scorpion toxin superfamily. Sodium channel inhibitor family. Alpha subfamily. Expressed by the venom gland.

Its subcellular location is the secreted. Functionally, alpha toxins bind voltage-independently at site-3 of sodium channels (Nav) and inhibit the inactivation of the activated channels, thereby blocking neuronal transmission. The protein is Alpha-toxin Bot11 of Buthus occitanus tunetanus (Common European scorpion).